We begin with the raw amino-acid sequence, 417 residues long: Alpha-galactosidase (417 aa).

A signal peptide spans 1 to 55 (MARASSSSSPPSPRLLLLLLVAVAATLLPEAAALGNFTAESRGARWRSRRARRRA). Alpha-D-galactose contacts are provided by Trp-71, Asp-106, Asp-107, Cys-156, Lys-183, Asp-185, Trp-219, Arg-236, and Asp-240. 2 cysteine pairs are disulfide-bonded: Cys-76–Cys-108 and Cys-156–Cys-187. Residue Asp-185 is the Nucleophile of the active site. The active-site Proton donor is Asp-240.

This sequence belongs to the glycosyl hydrolase 27 family.

The catalysed reaction is Hydrolysis of terminal, non-reducing alpha-D-galactose residues in alpha-D-galactosides, including galactose oligosaccharides, galactomannans and galactolipids.. It catalyses the reaction melibiose + H2O = D-galactose + D-glucose. It carries out the reaction raffinose + H2O = sucrose + D-galactose. The enzyme catalyses stachyose + H2O = raffinose + D-galactose. The catalysed reaction is alpha-D-Gal-(1-&gt;6)-beta-D-Man-(1-&gt;4)-beta-D-Man-(1-&gt;4)-D-Man + H2O = beta-D-Man-(1-&gt;4)-beta-D-Man-(1-&gt;4)-D-Man + D-galactose. It catalyses the reaction beta-D-Man-(1-&gt;4)-[alpha-D-Gal-(1-&gt;6)]-beta-D-Man-(1-&gt;4)-beta-D-Man-(1-&gt;4)-D-Man + H2O = beta-D-Man-(1-&gt;4)-beta-D-Man-(1-&gt;4)-beta-D-Man-(1-&gt;4)-D-Man + D-galactose. Its activity is regulated as follows. 1 mM Hg(2+) and Ag(2+) decrease activity by 98% and 96%, respectively. 1 mM Para-chloromercuribenzoic acid (PCMB) completely inhibits enzymatic activity. In terms of biological role, hydrolyzes melibiose, raffinose and stachyose in the following decreasing order of reactivity: raffinose, melibiose, stachyose. Acts on both the terminal alpha-galactosyl residue and the side-chain alpha-galactosyl residue of the galactomanno-oligosaccharides. The chain is Alpha-galactosidase from Oryza sativa subsp. japonica (Rice).